The following is a 54-amino-acid chain: Large ribosomal subunit protein bL32c (54 aa).

This sequence belongs to the bacterial ribosomal protein bL32 family.

It localises to the plastid. The protein resides in the chloroplast. This chain is Large ribosomal subunit protein bL32c, found in Cucumis sativus (Cucumber).